The primary structure comprises 347 residues: MLIKQGERLINARNWSELVKPDQILREEETASGTHGKFVCEPLERGYGTTIGNAMRRVLLASLQGAAFVSVKIIGVQHEFTTIHGVLEDITDVILNIKQVRLRMDTEEPQRLTLRVERKGPVTAADIVANQHVEVLNPDLHIATLTEDVVLEMELEVRMGKGYVPADMHEGLADEIGLIKLDSSFSPVRKVAYTVEQARVGQMTNYDRLLLEVWTDGSLTPEDAIAYSAKIIKDQISVFINFDERVSGDMRNGSGESGEVNEHLFKSIDDLELSVRATNCLRSANIGLVGELVQRTEAEMLKTKNFGRKSLDEIKGVLLGMGLDFGMKVDSFDKKYQEWKRKQQNEA.

The segment at M1–D243 is alpha N-terminal domain (alpha-NTD). The tract at residues V260–A347 is alpha C-terminal domain (alpha-CTD).

This sequence belongs to the RNA polymerase alpha chain family. In terms of assembly, homodimer. The RNAP catalytic core consists of 2 alpha, 1 beta, 1 beta' and 1 omega subunit. When a sigma factor is associated with the core the holoenzyme is formed, which can initiate transcription.

It catalyses the reaction RNA(n) + a ribonucleoside 5'-triphosphate = RNA(n+1) + diphosphate. DNA-dependent RNA polymerase catalyzes the transcription of DNA into RNA using the four ribonucleoside triphosphates as substrates. The sequence is that of DNA-directed RNA polymerase subunit alpha from Desulfovibrio desulfuricans (strain ATCC 27774 / DSM 6949 / MB).